The chain runs to 200 residues: Recombination protein RecR (200 aa).

The C4-type zinc-finger motif lies at 57–72; that stretch reads CQECRTFTEQDVCHIC. Residues 81–176 form the Toprim domain; sequence GQLCVVESPA…TASRIAHGVP (96 aa).

The protein belongs to the RecR family.

Functionally, may play a role in DNA repair. It seems to be involved in an RecBC-independent recombinational process of DNA repair. It may act with RecF and RecO. The polypeptide is Recombination protein RecR (Vibrio cholerae serotype O1 (strain ATCC 39541 / Classical Ogawa 395 / O395)).